A 385-amino-acid polypeptide reads, in one-letter code: DNA replication and repair protein RecF (385 aa).

30–37 (GPNGYGKT) is a binding site for ATP.

Belongs to the RecF family.

The protein localises to the cytoplasm. In terms of biological role, the RecF protein is involved in DNA metabolism; it is required for DNA replication and normal SOS inducibility. RecF binds preferentially to single-stranded, linear DNA. It also seems to bind ATP. The chain is DNA replication and repair protein RecF from Mycobacterium bovis (strain ATCC BAA-935 / AF2122/97).